A 241-amino-acid polypeptide reads, in one-letter code: Leucyl/phenylalanyl-tRNA--protein transferase (241 aa).

It belongs to the L/F-transferase family.

The protein localises to the cytoplasm. The enzyme catalyses N-terminal L-lysyl-[protein] + L-leucyl-tRNA(Leu) = N-terminal L-leucyl-L-lysyl-[protein] + tRNA(Leu) + H(+). It catalyses the reaction N-terminal L-arginyl-[protein] + L-leucyl-tRNA(Leu) = N-terminal L-leucyl-L-arginyl-[protein] + tRNA(Leu) + H(+). The catalysed reaction is L-phenylalanyl-tRNA(Phe) + an N-terminal L-alpha-aminoacyl-[protein] = an N-terminal L-phenylalanyl-L-alpha-aminoacyl-[protein] + tRNA(Phe). Its function is as follows. Functions in the N-end rule pathway of protein degradation where it conjugates Leu, Phe and, less efficiently, Met from aminoacyl-tRNAs to the N-termini of proteins containing an N-terminal arginine or lysine. The sequence is that of Leucyl/phenylalanyl-tRNA--protein transferase from Neisseria meningitidis serogroup B (strain ATCC BAA-335 / MC58).